The sequence spans 1726 residues: Protein Shroom2 (1726 aa).

The PDZ domain maps to 79–159; sequence AGGCYSYWRG…ILKMIVKRRN (81 aa). 4 disordered regions span residues 294 to 373, 425 to 451, 657 to 676, and 697 to 785; these read DNTK…RSDS, RTVADTRRTSNSSYHAGLNADQGLSPY, FSQLDHSEKGSYRSSQDYSW, and EGRN…STYR. Positions 318–328 are enriched in polar residues; it reads VLQSTSINETS. A compositionally biased stretch (basic and acidic residues) spans 329–338; the sequence is KIQRTEDNTE. Over residues 657–667 the composition is skewed to basic and acidic residues; it reads FSQLDHSEKGS. Polar residues-rich tracts occupy residues 746-755 and 769-785; these read SKSTAALTES and LESMSPTSEGSFSSTYR. The region spanning 788-877 is the ASD1 domain; the sequence is LQEAQARVLR…SEPEKINEVG (90 aa). Disordered regions lie at residues 913–968, 1007–1080, 1092–1120, 1166–1240, 1269–1299, and 1471–1499; these read PKVP…DKVT, LDAD…QCGA, KWKPHDKSFPIPETSNESQQSRARSGTLP, FKKR…KNPS, SSKSHLQIPGMEPSRSPSPQFAPQKLTDKPP, and AQQRRKHLPKIPSPRSTDDKKDEQNVPSA. Residues 917–926 are compositionally biased toward low complexity; sequence PKVVSSSQSE. A compositionally biased stretch (basic and acidic residues) spans 936-948; that stretch reads DYAKSSEGQESKR. 2 stretches are compositionally biased toward polar residues: residues 1054 to 1070 and 1104 to 1119; these read NSNSTHCRSSTGDSPTR and ETSNESQQSRARSGTL. The span at 1191 to 1205 shows a compositional bias: low complexity; the sequence is SSSSLATSSESLLTA. Over residues 1209–1235 the composition is skewed to polar residues; it reads RAQSYSPSSQDTFPPQSLQKQSPSTYP. The ASD2 domain maps to 1427–1721; that stretch reads EELVREIVDK…QLKCLTDSLP (295 aa).

It belongs to the shroom family. In terms of assembly, interacts with F-actin.

Its subcellular location is the apical cell membrane. It localises to the cell junction. It is found in the tight junction. The protein resides in the cytoplasm. The protein localises to the cytoskeleton. May be involved in endothelial cell morphology changes during cell spreading. Required for eye pigmentation. In the retinal pigment epithelium, regulates the biogenesis of melanosomes and promotes their association with the apical cell surface by inducing gamma-tubulin redistribution. The sequence is that of Protein Shroom2 (shroom2) from Xenopus tropicalis (Western clawed frog).